Reading from the N-terminus, the 361-residue chain is Phospho-N-acetylmuramoyl-pentapeptide-transferase (361 aa).

The next 10 helical transmembrane spans lie at 27–47 (GALF…ISLL), 72–92 (TPTM…LLWA), 99–119 (VWVT…DDYL), 135–155 (LALE…YSPA), 169–189 (ALLN…VGAG), 200–220 (GLAI…AYLV), 240–260 (LAVV…FNAP), 264–284 (IFMG…IAVA), 289–309 (IVLA…IIQV), and 338–358 (QVVI…LATL).

This sequence belongs to the glycosyltransferase 4 family. MraY subfamily. Mg(2+) serves as cofactor.

Its subcellular location is the cell inner membrane. It catalyses the reaction UDP-N-acetyl-alpha-D-muramoyl-L-alanyl-gamma-D-glutamyl-meso-2,6-diaminopimeloyl-D-alanyl-D-alanine + di-trans,octa-cis-undecaprenyl phosphate = di-trans,octa-cis-undecaprenyl diphospho-N-acetyl-alpha-D-muramoyl-L-alanyl-D-glutamyl-meso-2,6-diaminopimeloyl-D-alanyl-D-alanine + UMP. It participates in cell wall biogenesis; peptidoglycan biosynthesis. In terms of biological role, catalyzes the initial step of the lipid cycle reactions in the biosynthesis of the cell wall peptidoglycan: transfers peptidoglycan precursor phospho-MurNAc-pentapeptide from UDP-MurNAc-pentapeptide onto the lipid carrier undecaprenyl phosphate, yielding undecaprenyl-pyrophosphoryl-MurNAc-pentapeptide, known as lipid I. The protein is Phospho-N-acetylmuramoyl-pentapeptide-transferase of Methylobacterium radiotolerans (strain ATCC 27329 / DSM 1819 / JCM 2831 / NBRC 15690 / NCIMB 10815 / 0-1).